A 638-amino-acid chain; its full sequence is Cytoplasmic dynein 1 intermediate chain 2 (638 aa).

Basic and acidic residues-rich tracts occupy residues 1–13 (MSDK…ELER) and 20–43 (QIRE…KKEA). Disordered stretches follow at residues 1-135 (MSDK…GRGP) and 155-214 (TYTK…EEKQ). At S2 the chain carries N-acetylserine. Position 51 is a diphosphoserine (S51). A phosphoserine mark is found at S51, S73, W81, P84, and S90. Low complexity predominate over residues 88–97 (PSSKSVSTPS). T95 carries the post-translational modification Phosphothreonine. S97, S101, and S104 each carry phosphoserine. Residues 190-214 (EKTLKKDEENDSKAPPHELTEEEKQ) show a composition bias toward basic and acidic residues. WD repeat units follow at residues 277 to 326 (SKHR…TTPE), 330 to 370 (HCQS…RTPV), 379 to 420 (AHTH…HPQD), 429 to 469 (SKAV…AGIS), 474 to 519 (GHQG…PLYS), 522 to 562 (DNAD…EVPT), and 568 to 607 (EGNP…AVPR).

This sequence belongs to the dynein intermediate chain family. In terms of assembly, homodimer. The cytoplasmic dynein 1 complex consists of two catalytic heavy chains (HCs) and a number of non-catalytic subunits presented by intermediate chains (ICs), light intermediate chains (LICs) and light chains (LCs); the composition seems to vary in respect to the IC, LIC and LC composition. The heavy chain homodimer serves as a scaffold for the probable homodimeric assembly of the respective non-catalytic subunits. The ICs and LICs bind directly to the HC dimer and the LCs assemble on the IC dimer. Interacts with DYNLT3. Interacts with DYNLT1. Interacts (dephosphorylated at Ser-90) with DCTN1. Interacts with BICD2. Interacts with SPEF2. Interacts with CFAP61. As to quaternary structure, (Microbial infection) Interacts with human adenovirus 5 hexon protein; this interaction probably allows virus intracellular transport. The phosphorylation status of Ser-90 appears to be involved in dynactin-dependent target binding. In terms of processing, pyrophosphorylation by 5-diphosphoinositol pentakisphosphate (5-IP7) promotes interaction with DCTN1. Serine pyrophosphorylation is achieved by Mg(2+)-dependent, but enzyme independent transfer of a beta-phosphate from a inositol pyrophosphate to a pre-phosphorylated serine residue.

The protein resides in the cytoplasm. The protein localises to the cytoskeleton. Acts as one of several non-catalytic accessory components of the cytoplasmic dynein 1 complex that are thought to be involved in linking dynein to cargos and to adapter proteins that regulate dynein function. Cytoplasmic dynein 1 acts as a motor for the intracellular retrograde motility of vesicles and organelles along microtubules. The intermediate chains mediate the binding of dynein to dynactin via its 150 kDa component (p150-glued) DCTN1. Involved in membrane-transport, such as Golgi apparatus, late endosomes and lysosomes. This is Cytoplasmic dynein 1 intermediate chain 2 from Homo sapiens (Human).